We begin with the raw amino-acid sequence, 654 residues long: WD repeat-containing protein 70 (654 aa).

2 disordered regions span residues 1–26 and 43–175; these read MERS…VTMG and FEQT…DSHE. Residues 45 to 78 show a composition bias toward basic and acidic residues; the sequence is QTRRTAVERSRKTLEAREKEEEMNREKELRRQNE. Positions 99 to 111 are enriched in low complexity; it reads RDTSSSESEQSSD. Residues 147 to 164 are compositionally biased toward acidic residues; that stretch reads NEEEEEAEEEEEEEEEEE. Over residues 165–175 the composition is skewed to basic and acidic residues; it reads NPVHKIPDSHE. WD repeat units lie at residues 180–219, 227–268, 281–321, 330–369, 376–415, 421–466, and 469–508; these read HGTK…ASFK, CECH…ECIK, GHTA…KQKS, GKKV…HPKF, DSGT…KPLF, PTMF…RVYE, and ITDA…QRGA. Lysine 296 participates in a covalent cross-link: Glycyl lysine isopeptide (Lys-Gly) (interchain with G-Cter in SUMO2). Lysine 452 bears the N6-acetyllysine mark. The span at 540-565 shows a compositional bias: basic and acidic residues; sequence REPRQRSTRKQLEKDRLDPLKSHKPE. The segment at 540–579 is disordered; it reads REPRQRSTRKQLEKDRLDPLKSHKPEPPVAGPGRGGRVGT. Residue threonine 579 is modified to Phosphothreonine. Glycyl lysine isopeptide (Lys-Gly) (interchain with G-Cter in SUMO2) cross-links involve residues lysine 590 and lysine 596. Residues serine 621 and serine 638 each carry the phosphoserine modification. Residues 630–654 are disordered; sequence KTMFAQVESDDEEAKNEPEWKKRKI. Basic and acidic residues predominate over residues 644 to 654; sequence KNEPEWKKRKI.

This sequence belongs to the WD repeat GAD-1 family.

The sequence is that of WD repeat-containing protein 70 (WDR70) from Homo sapiens (Human).